Here is a 78-residue protein sequence, read N- to C-terminus: RNA-binding protein Hfq (78 aa).

A Sm domain is found at 10 to 69 (DPFLNALRKEHVPVSIYLVNGIKLQGNIESFDQYVVLLRNTVTQMVYKHAISTVVPARPV).

Belongs to the Hfq family. As to quaternary structure, homohexamer.

Functionally, RNA chaperone that binds small regulatory RNA (sRNAs) and mRNAs to facilitate mRNA translational regulation in response to envelope stress, environmental stress and changes in metabolite concentrations. Also binds with high specificity to tRNAs. The polypeptide is RNA-binding protein Hfq (Paraburkholderia phytofirmans (strain DSM 17436 / LMG 22146 / PsJN) (Burkholderia phytofirmans)).